The chain runs to 707 residues: Transcription factor 12 (707 aa).

The disordered stretch occupies residues 25–109 (AMFSPPVNSG…TPFMNSNLIG (85 aa)). 2 stretches are compositionally biased toward polar residues: residues 30 to 48 (PVNSGKTRPTTLGSSQFSG) and 56 to 76 (GTTSWGTSGQPSPSYDSSRGF). Residues Ser-47, Ser-67, and Ser-79 each carry the phosphoserine modification. Over residues 81–93 (HYSDHLNDSRLGT) the composition is skewed to basic and acidic residues. At Ser-98 the chain carries Phosphoserine. Lys-110 is covalently cross-linked (Glycyl lysine isopeptide (Lys-Gly) (interchain with G-Cter in SUMO2)). Phosphoserine is present on residues Ser-116 and Ser-124. The interval 119-140 (LYSRDSGLSGCQSSLLRQDLGL) is leucine-zipper. Disordered stretches follow at residues 140–222 (LGSP…SMFA) and 249–313 (FGGI…ASHT). Residues 144–163 (AQLSSSGKPGTPYYSFSATS) show a composition bias toward polar residues. Residue Lys-181 forms a Glycyl lysine isopeptide (Lys-Gly) (interchain with G-Cter in SUMO2) linkage. Residues 256–269 (STSHMSQSSSYGSL) are compositionally biased toward low complexity. The segment covering 282 to 306 (VSPTDINTSLPPMSSFHRGSTSSSP) has biased composition (polar residues). At Thr-313 the chain carries Phosphothreonine. The residue at position 333 (Ser-333) is a Phosphoserine. 2 disordered regions span residues 349 to 393 (PDHT…YENS) and 521 to 605 (HKTP…ERRM). A compositionally biased stretch (low complexity) spans 352–363 (TSSSFPSNPSTP). Composition is skewed to polar residues over residues 364 to 377 (VGSPSPLTAGTSQW) and 384 to 393 (APSSPSYENS). 2 stretches are compositionally biased toward basic and acidic residues: residues 543 to 555 (IKTENKEKDENLH) and 561 to 576 (DDMKSDDESSQKDIKV). A Glycyl lysine isopeptide (Lys-Gly) (interchain with G-Cter in SUMO2) cross-link involves residue Lys-544. Residue Ser-565 is modified to Phosphoserine. Residue Lys-575 forms a Glycyl lysine isopeptide (Lys-Gly) (interchain with G-Cter in SUMO2) linkage. Thr-582 carries the phosphothreonine modification. Ser-583 and Ser-584 each carry phosphoserine. Basic and acidic residues predominate over residues 593–605 (PEQKIEREKERRM). The bHLH domain occupies 602–655 (ERRMANNARERLRVRDINEAFKELGRMCQLHLKSEKPQTKLLILHQAVAVILSL). Residues Lys-634 and Lys-678 each participate in a glycyl lysine isopeptide (Lys-Gly) (interchain with G-Cter in SUMO2) cross-link. A class A specific domain region spans residues 657–680 (QQVRERNLNPKAACLKRREEEKVS). Positions 675–707 (EEEKVSAASAEPPTTLPGTHPGLSETTNPMGHL) are disordered. Over residues 686 to 697 (PPTTLPGTHPGL) the composition is skewed to low complexity. Residues 698 to 707 (SETTNPMGHL) show a composition bias toward polar residues.

Efficient DNA binding requires dimerization with another bHLH protein. Forms homo- or heterooligomers with myogenin, E12 and ITF2 proteins. Interacts with PTF1. Interacts with RUNX1T1. Interacts with NEUROD2. Interacts with BHLHA9. As to expression, isoform gamma is highly expressed in lung, kidney, spleen, and is expressed at reduced levels in heart, muscle, liver, pituitary, brain and the trigeminal ganglion. The expression of isoform alpha predominates over isoform gamma in the pituitary and the brain.

The protein resides in the nucleus. In terms of biological role, transcriptional regulator. Involved in the initiation of neuronal differentiation. Activates transcription by binding to the E box (5'-CANNTG-3'). May be involved in the functional network that regulates the development of the GnRH axis. This is Transcription factor 12 (Tcf12) from Rattus norvegicus (Rat).